We begin with the raw amino-acid sequence, 272 residues long: Glycerol-3-phosphate acyltransferase (272 aa).

The next 6 membrane-spanning stretches (helical) occupy residues 9 to 29 (IIIL…GILI), 60 to 80 (AIVM…CLLI), 99 to 119 (VIIY…CFYF), 149 to 169 (ASIS…ICLI), 173 to 193 (VSLA…IPHL), and 226 to 246 (LNWW…VLVI).

This sequence belongs to the PlsY family. Probably interacts with PlsX.

The protein localises to the cell membrane. The enzyme catalyses an acyl phosphate + sn-glycerol 3-phosphate = a 1-acyl-sn-glycero-3-phosphate + phosphate. Its pathway is lipid metabolism; phospholipid metabolism. Functionally, catalyzes the transfer of an acyl group from acyl-phosphate (acyl-PO(4)) to glycerol-3-phosphate (G3P) to form lysophosphatidic acid (LPA). This enzyme utilizes acyl-phosphate as fatty acyl donor, but not acyl-CoA or acyl-ACP. The polypeptide is Glycerol-3-phosphate acyltransferase (Malacoplasma penetrans (strain HF-2) (Mycoplasma penetrans)).